A 369-amino-acid polypeptide reads, in one-letter code: MTSVTLRNVCKAYGDNLISKNVDLEIAEGEFVVFVGPSGCGKSTLLRCIAGLEDITSGDLYFGKERMNDVPPSDRGVGMVFQSYALYPHLNLFDNMSFGMKLAKADKSEIKKRVNNAADILQLGHLLERQPKSLSGGQRQRVAIGRTIVSQPNVFLLDEPLSNLDAALRVQMRIEIAKLHKQLGCTMIYVTHDQVEAMTMAEKIVVLDGGYVSQVGKPLELYHYPQNRFVAGFIGSPKMNFMSVFIEQVEDERVMVQTADGKAFWIPVDGTTVTKGDRMSLGIRPEHLVSAEEGDTSIEGTVQVVEKLGYETQVYIHLDHVDADFIYRRPDTLQVEAGDSFKVGIPAHRCHLFHSDGRACRRLYQEAGI.

Residues 4 to 234 enclose the ABC transporter domain; the sequence is VTLRNVCKAY…PQNRFVAGFI (231 aa). ATP is bound at residue 36 to 43; the sequence is GPSGCGKS.

This sequence belongs to the ABC transporter superfamily. Maltooligosaccharide importer (TC 3.A.1.1.1) family. In terms of assembly, the complex is composed of two ATP-binding proteins (MalK), two transmembrane proteins (MalG and MalK) and a solute-binding protein (MalE).

The protein localises to the cell inner membrane. It carries out the reaction D-maltose(out) + ATP + H2O = D-maltose(in) + ADP + phosphate + H(+). In terms of biological role, part of the ABC transporter complex MalEFGK involved in maltose/maltodextrin import. Responsible for energy coupling to the transport system. In Photobacterium profundum (strain SS9), this protein is Maltose/maltodextrin import ATP-binding protein MalK.